A 189-amino-acid chain; its full sequence is Phosphoheptose isomerase (189 aa).

The SIS domain maps to 34-189 (LADSLAGGRK…CDLVEKRLFP (156 aa)). 49 to 51 (NGG) provides a ligand contact to substrate. Zn(2+) contacts are provided by histidine 58 and glutamate 62. Substrate is bound by residues glutamate 62, 91 to 92 (ND), 117 to 119 (STS), serine 122, and glutamine 169. Zn(2+)-binding residues include glutamine 169 and histidine 177.

Belongs to the SIS family. GmhA subfamily. In terms of assembly, homotetramer. Zn(2+) is required as a cofactor.

Its subcellular location is the cytoplasm. It carries out the reaction 2 D-sedoheptulose 7-phosphate = D-glycero-alpha-D-manno-heptose 7-phosphate + D-glycero-beta-D-manno-heptose 7-phosphate. Its pathway is carbohydrate biosynthesis; D-glycero-D-manno-heptose 7-phosphate biosynthesis; D-glycero-alpha-D-manno-heptose 7-phosphate and D-glycero-beta-D-manno-heptose 7-phosphate from sedoheptulose 7-phosphate: step 1/1. Its function is as follows. Catalyzes the isomerization of sedoheptulose 7-phosphate in D-glycero-D-manno-heptose 7-phosphate. The sequence is that of Phosphoheptose isomerase from Geobacter sulfurreducens (strain ATCC 51573 / DSM 12127 / PCA).